Consider the following 112-residue polypeptide: CENP-A recruiting complex protein mis19 (112 aa).

As to quaternary structure, component of the CENP-A recruiting complex composed of at least mis16, mis19, mis19 and mis20.

It localises to the chromosome. Its subcellular location is the centromere. It is found in the kinetochore. In terms of biological role, component of the CENP-A recruiting complex that ensures the integrity of mitotic spindles through maintenance of kinetochore factors mis6/CENP-I and cnp1/CENP-A. Links mis16 and mis18 to recruit CENP-A through interacting with non-sense-mediated mRNA decay (NMD) factors and the SWI/SNF complex. Also links mis18 with the CCAN/mis6/ctf19 complex to promote CENP-A assembly. The chain is CENP-A recruiting complex protein mis19 from Schizosaccharomyces pombe (strain 972 / ATCC 24843) (Fission yeast).